Reading from the N-terminus, the 21-residue chain is Peptide Hact-2 (21 aa).

Intrachain disulfides connect C1/C18, C5/C14, and C9/C20.

Expressed in tentacles.

The protein resides in the nematocyst. It is found in the secreted. Peptide of unknown function. Does not exhibit antimicrobial activity against Escherichia coli and Staphylococcus aureus. Promotes cell proliferation of human fibroblast skin cells. Does not exhibit any effect on voltage-gated ion channels, including potassium, sodium, and calcium channels. The chain is Peptide Hact-2 from Heliofungia actiniformis (Mushroom coral).